Consider the following 674-residue polypeptide: DNA ligase (674 aa).

NAD(+)-binding positions include 34-38 (DFEFD), 83-84 (SL), and Glu-117. The active-site N6-AMP-lysine intermediate is Lys-119. Residues Arg-140, Glu-184, Lys-297, and Lys-321 each contribute to the NAD(+) site. Positions 415, 418, 433, and 439 each coordinate Zn(2+). A BRCT domain is found at 598-674 (LVNNNFEGQS…IDEDEFERML (77 aa)).

This sequence belongs to the NAD-dependent DNA ligase family. LigA subfamily. Mg(2+) serves as cofactor. It depends on Mn(2+) as a cofactor.

It catalyses the reaction NAD(+) + (deoxyribonucleotide)n-3'-hydroxyl + 5'-phospho-(deoxyribonucleotide)m = (deoxyribonucleotide)n+m + AMP + beta-nicotinamide D-nucleotide.. Its function is as follows. DNA ligase that catalyzes the formation of phosphodiester linkages between 5'-phosphoryl and 3'-hydroxyl groups in double-stranded DNA using NAD as a coenzyme and as the energy source for the reaction. It is essential for DNA replication and repair of damaged DNA. The polypeptide is DNA ligase (Chlorobaculum tepidum (strain ATCC 49652 / DSM 12025 / NBRC 103806 / TLS) (Chlorobium tepidum)).